Reading from the N-terminus, the 461-residue chain is Glycerol-3-phosphate acyltransferase, chloroplastic (461 aa).

The transit peptide at 1 to 96 directs the protein to the chloroplast; the sequence is MSMTGSSAYY…SPPNMSASVS (96 aa). Positions 47 to 76 are enriched in low complexity; sequence LLSSTSSSSSSSISLRSSTAPSPSCSSVTP. Positions 47 to 88 are disordered; it reads LLSSTSSSSSSSISLRSSTAPSPSCSSVTPKDNCLASAKHSP. The short motif at 231–236 is the HXXXXD motif element; it reads HQTEAD.

It belongs to the GPAT/DAPAT family.

It localises to the plastid. It is found in the chloroplast stroma. It carries out the reaction sn-glycerol 3-phosphate + an acyl-CoA = a 1-acyl-sn-glycero-3-phosphate + CoA. The protein operates within phospholipid metabolism; CDP-diacylglycerol biosynthesis; CDP-diacylglycerol from sn-glycerol 3-phosphate: step 1/3. Esterifies acyl-group from acyl-ACP to the sn-1 position of glycerol-3-phosphate. The enzyme from chilling-resistant plants discriminates against non-fluid palmitic acid and selects oleic acid whereas the enzyme from sensitive plants accepts both fatty acids. The sequence is that of Glycerol-3-phosphate acyltransferase, chloroplastic (PLSB) from Phaseolus vulgaris (Kidney bean).